A 363-amino-acid polypeptide reads, in one-letter code: GDSL esterase/lipase At2g24560 (363 aa).

The N-terminal stretch at 1-22 (MSTSKTITFTLFIAALLSSCDA) is a signal peptide. Asn-25 carries N-linked (GlcNAc...) asparagine glycosylation. Ser-41 acts as the Nucleophile in catalysis. 2 N-linked (GlcNAc...) asparagine glycosylation sites follow: Asn-103 and Asn-325. Residues Asp-333 and His-336 contribute to the active site.

It belongs to the 'GDSL' lipolytic enzyme family.

Its subcellular location is the secreted. This is GDSL esterase/lipase At2g24560 from Arabidopsis thaliana (Mouse-ear cress).